We begin with the raw amino-acid sequence, 468 residues long: Acyltransferase R4 (468 aa).

The next 7 membrane-spanning stretches (helical) occupy residues 21–41 (GILSIIIFNAHLTPIIILGYD), 70–90 (LFTIPIVKLVYSASPAVCLFF), 133–153 (LNLLAMASMIVPFVLVKTGFF), 252–272 (FLAALVVMGIAVGSLECPLFW), 308–328 (DPFGKAVVLAIGCYFASYPTW), 388–408 (FAVYLVHFCLVISFGPGLFSW), and 423–443 (IGFGIAYAVLFIGVLLAAAMF).

It belongs to the acyltransferase 3 family.

It is found in the membrane. Its pathway is secondary metabolite biosynthesis. Its function is as follows. Acyltransferase; part of the gene cluster that mediates the biosynthesis of squalestatin S1 (SQS1, also known as zaragozic acid A), a heavily oxidized fungal polyketide that offers potent cholesterol lowering activity by targeting squalene synthase (SS). SQS1 is composed of a 2,8-dioxobicyclic[3.2.1]octane-3,4,5-tricarboxyclic acid core that is connected to two lipophilic polyketide arms. These initial steps feature the priming of an unusual benzoic acid starter unit onto the highly reducing polyketide synthase pks2, followed by oxaloacetate extension and product release to generate a tricarboxylic acid containing product. The phenylalanine ammonia lyase (PAL) M7 and the acyl-CoA ligase M9 are involved in transforming phenylalanine into benzoyl-CoA. The citrate synthase-like protein R3 is involved in connecting the C-alpha-carbons of the hexaketide chain and oxaloacetate to afford the tricarboxylic acid unit. The potential hydrolytic enzymes, M8 and M10, are in close proximity to pks2 and may participate in product release. On the other side, the tetraketide arm is synthesized by a the squalestatin tetraketide synthase pks1 and enzymatically esterified to the core in the last biosynthetic step, by the acetyltransferase M4. The biosynthesis of the tetraketide must involve 3 rounds of chain extension. After the first and second rounds methyl-transfer occurs, and in all rounds of extension the ketoreductase and dehydratase are active. The enoyl reductase and C-MeT of pks1 are not active in the final round of extension. The acetyltransferase M4 appears to have a broad substrate selectivity for its acyl CoA substrate, allowing the in vitro synthesis of novel squalestatins. The biosynthesis of SQS1 requires several oxidative steps likely performed by oxidoreductases M1, R1 and R2. Finally, in support of the identification of the cluster as being responsible for SQS1 production, the cluster contains a gene encoding a putative squalene synthase (SS) R6, suggesting a likely mechanism for self-resistance. In Phoma sp. (strain ATCC 20986 / MF5453), this protein is Acyltransferase R4.